Here is a 712-residue protein sequence, read N- to C-terminus: Polyribonucleotide nucleotidyltransferase (712 aa).

Mg(2+) contacts are provided by D487 and D493. A KH domain is found at 554–613; the sequence is PKIITMTINPDKIRDVIGPSGKQINKIIEETGVKIDIEQDGTVFISSINQEMNDKAKKII. The S1 motif domain occupies 623–691; sequence GEIYEGKVKR…KQGRVNLSRK (69 aa).

This sequence belongs to the polyribonucleotide nucleotidyltransferase family. Mg(2+) serves as cofactor.

The protein localises to the cytoplasm. The catalysed reaction is RNA(n+1) + phosphate = RNA(n) + a ribonucleoside 5'-diphosphate. In terms of biological role, involved in mRNA degradation. Catalyzes the phosphorolysis of single-stranded polyribonucleotides processively in the 3'- to 5'-direction. The protein is Polyribonucleotide nucleotidyltransferase of Bacillus cereus (strain AH187).